A 364-amino-acid chain; its full sequence is 2-oxoglutarate-dependent dioxygenase imqE (364 aa).

Residues 73–92 (KQKAAHPPGPNPQRGWSGIG) form a disordered region. The Fe2OG dioxygenase domain occupies 199 to 315 (DGSELRLLHY…RWSAAYFFKA (117 aa)). Residues His227, Asp229, and His287 each coordinate Fe cation. Arg306 is a 2-oxoglutarate binding site.

Belongs to the iron/ascorbate-dependent oxidoreductase family. Requires Fe(2+) as cofactor.

It participates in secondary metabolite biosynthesis. 2-oxoglutarate-dependent dioxygenase; part of the gene cluster that mediates the biosynthesis of imizoquins A to D, tripeptide-derived alkaloids that serve a protective role against oxidative stress that are essential for normal germination. ImqB is a canonical three-module NRPS that assembles the tripeptide backbone of the imizoquins via condensation of Trp, Tyr, and Leu-derived precursors. N-methylation by imqF and phenol oxidation by imqC, followed by cyclization via the FAD-dependent oxidase imqH carry out the three-step transformation of L-tyrosine into tetrahydroisoquinoline. Importantly, this sequence requires the presence of a free amine in the tyrosine moiety, indicating that isoquinoline formation occurs prior to peptide bond formation. The imidazolidin-4-one ring of imizoquins could form following additional oxidation of the methyl-derived bridgehead carbon by imqH. Lastly, O-methylation by imqG and leucine hydroxylation by imqE complete biosynthesis of the imizoquins. The protein is 2-oxoglutarate-dependent dioxygenase imqE of Aspergillus flavus (strain ATCC 200026 / FGSC A1120 / IAM 13836 / NRRL 3357 / JCM 12722 / SRRC 167).